The primary structure comprises 316 residues: Transaldolase (316 aa).

Lys132 (schiff-base intermediate with substrate) is an active-site residue.

The protein belongs to the transaldolase family. Type 1 subfamily. In terms of assembly, homodimer.

The protein localises to the cytoplasm. The enzyme catalyses D-sedoheptulose 7-phosphate + D-glyceraldehyde 3-phosphate = D-erythrose 4-phosphate + beta-D-fructose 6-phosphate. It functions in the pathway carbohydrate degradation; pentose phosphate pathway; D-glyceraldehyde 3-phosphate and beta-D-fructose 6-phosphate from D-ribose 5-phosphate and D-xylulose 5-phosphate (non-oxidative stage): step 2/3. Functionally, transaldolase is important for the balance of metabolites in the pentose-phosphate pathway. This Vibrio cholerae serotype O1 (strain ATCC 39541 / Classical Ogawa 395 / O395) protein is Transaldolase.